The following is a 449-amino-acid chain: Probable glycine dehydrogenase (decarboxylating) subunit 1 (449 aa).

The protein belongs to the GcvP family. N-terminal subunit subfamily. The glycine cleavage system is composed of four proteins: P, T, L and H. In this organism, the P 'protein' is a heterodimer of two subunits.

The enzyme catalyses N(6)-[(R)-lipoyl]-L-lysyl-[glycine-cleavage complex H protein] + glycine + H(+) = N(6)-[(R)-S(8)-aminomethyldihydrolipoyl]-L-lysyl-[glycine-cleavage complex H protein] + CO2. Functionally, the glycine cleavage system catalyzes the degradation of glycine. The P protein binds the alpha-amino group of glycine through its pyridoxal phosphate cofactor; CO(2) is released and the remaining methylamine moiety is then transferred to the lipoamide cofactor of the H protein. This chain is Probable glycine dehydrogenase (decarboxylating) subunit 1, found in Rhodospirillum centenum (strain ATCC 51521 / SW).